Consider the following 267-residue polypeptide: tRNA pseudouridine synthase A (267 aa).

Catalysis depends on Asp-53, which acts as the Nucleophile. Substrate is bound at residue Tyr-114.

The protein belongs to the tRNA pseudouridine synthase TruA family. Homodimer.

The catalysed reaction is uridine(38/39/40) in tRNA = pseudouridine(38/39/40) in tRNA. In terms of biological role, formation of pseudouridine at positions 38, 39 and 40 in the anticodon stem and loop of transfer RNAs. The sequence is that of tRNA pseudouridine synthase A from Chlamydia trachomatis serovar A (strain ATCC VR-571B / DSM 19440 / HAR-13).